The sequence spans 95 residues: Signal recognition particle 19 kDa protein (95 aa).

This sequence belongs to the SRP19 family. Part of the signal recognition particle protein translocation system, which is composed of SRP and FtsY. Archaeal SRP consists of a 7S RNA molecule of 300 nucleotides and two protein subunits: SRP54 and SRP19.

The protein resides in the cytoplasm. Functionally, involved in targeting and insertion of nascent membrane proteins into the cytoplasmic membrane. Binds directly to 7S RNA and mediates binding of the 54 kDa subunit of the SRP. In Pyrobaculum islandicum (strain DSM 4184 / JCM 9189 / GEO3), this protein is Signal recognition particle 19 kDa protein.